Reading from the N-terminus, the 389-residue chain is MTNQTQLSSKTYDTHFAKLTAEQLAENAKKKVIIGMSGGVDSSVSAFILQQQGYQVEGLFMKNWEEDDDTDYCTAAADLADAQAVADKLGMKLHKINFAAEYWDNVFEHFLNEYKAGRTPNPDILCNKEIKFKAFLEYAAEDLGADYIATGHYVRRSGDDNNAQLLRGLDANKDQSYFLYTLSHKQVGQSLFPVGDIEKPIVRQIAEDLGLATAKKKDSTGICFIGERKFKDFLARYLPAQPGEIRTVGGKVVGRHDGLMYHTLGQRKGLGIGGVKGLSEDPFYVVEKDLINNVLVVAQGHDNSALLSSGLIATQLHWVDRQPIRENLRCTVKTRYRQTDIACEIQPIDDDTIRVIFDDPQIAVTPGQSAVFYQGEVCLGGGVIEEQLK.

Residues 35-42 (GMSGGVDS) and Met61 each bind ATP. The interaction with target base in tRNA stretch occupies residues 121–123 (NPD). The active-site Nucleophile is the Cys126. Residues Cys126 and Cys223 are joined by a disulfide bond. Residue Gly151 participates in ATP binding. The interaction with tRNA stretch occupies residues 173-175 (KDQ). The active-site Cysteine persulfide intermediate is the Cys223. Residues 335–336 (RY) are interaction with tRNA.

It belongs to the MnmA/TRMU family.

It localises to the cytoplasm. It catalyses the reaction S-sulfanyl-L-cysteinyl-[protein] + uridine(34) in tRNA + AH2 + ATP = 2-thiouridine(34) in tRNA + L-cysteinyl-[protein] + A + AMP + diphosphate + H(+). In terms of biological role, catalyzes the 2-thiolation of uridine at the wobble position (U34) of tRNA, leading to the formation of s(2)U34. In Actinobacillus pleuropneumoniae serotype 5b (strain L20), this protein is tRNA-specific 2-thiouridylase MnmA.